The following is a 285-amino-acid chain: Bifunctional protein FolD (285 aa).

Residues 166-168, Ser-191, and Ile-232 contribute to the NADP(+) site; that span reads GRS.

The protein belongs to the tetrahydrofolate dehydrogenase/cyclohydrolase family. As to quaternary structure, homodimer.

The catalysed reaction is (6R)-5,10-methylene-5,6,7,8-tetrahydrofolate + NADP(+) = (6R)-5,10-methenyltetrahydrofolate + NADPH. It carries out the reaction (6R)-5,10-methenyltetrahydrofolate + H2O = (6R)-10-formyltetrahydrofolate + H(+). It participates in one-carbon metabolism; tetrahydrofolate interconversion. In terms of biological role, catalyzes the oxidation of 5,10-methylenetetrahydrofolate to 5,10-methenyltetrahydrofolate and then the hydrolysis of 5,10-methenyltetrahydrofolate to 10-formyltetrahydrofolate. The protein is Bifunctional protein FolD of Rickettsia typhi (strain ATCC VR-144 / Wilmington).